Reading from the N-terminus, the 439-residue chain is Arginine biosynthesis bifunctional protein ArgJ, mitochondrial (439 aa).

Substrate-binding residues include T175, K201, T212, E301, N434, and S439. T212 serves as the catalytic Nucleophile.

The protein belongs to the ArgJ family. In terms of assembly, heterodimer of an alpha and a beta chain. In terms of processing, the alpha and beta chains are autoproteolytically processed from a single precursor protein within the mitochondrion.

Its subcellular location is the mitochondrion matrix. It carries out the reaction N(2)-acetyl-L-ornithine + L-glutamate = N-acetyl-L-glutamate + L-ornithine. The enzyme catalyses L-glutamate + acetyl-CoA = N-acetyl-L-glutamate + CoA + H(+). The protein operates within amino-acid biosynthesis; L-arginine biosynthesis; L-ornithine and N-acetyl-L-glutamate from L-glutamate and N(2)-acetyl-L-ornithine (cyclic): step 1/1. It functions in the pathway amino-acid biosynthesis; L-arginine biosynthesis; N(2)-acetyl-L-ornithine from L-glutamate: step 1/4. In terms of biological role, catalyzes two activities which are involved in the cyclic version of arginine biosynthesis: the synthesis of acetylglutamate from glutamate and acetyl-CoA, and of ornithine by transacetylation between acetylornithine and glutamate. This chain is Arginine biosynthesis bifunctional protein ArgJ, mitochondrial (ECM42), found in Candida albicans (strain SC5314 / ATCC MYA-2876) (Yeast).